The following is a 123-amino-acid chain: MAYSKLGRTSSQRKALLRDLATDLIINERIQTTEQKAKELRPVVEKLITLGKRGDLHARRQVASFVRREAAGQNEAGKTQDAIQKLFADVAPRFAERQGGYTRIMKMGPRRGDGAEMVIIELV.

It belongs to the bacterial ribosomal protein bL17 family. Part of the 50S ribosomal subunit. Contacts protein L32.

The sequence is that of Large ribosomal subunit protein bL17 from Exiguobacterium sibiricum (strain DSM 17290 / CCUG 55495 / CIP 109462 / JCM 13490 / 255-15).